The following is a 610-amino-acid chain: MSEIFDAKAFLKTVTSQPGVYRMYDAGGTVIYVGKAKDLKKRLSSYFRSNLASRKTEALVAQIQHIDVTVTHTETEALLLEHNYIKLYQPRYNVLLRDDKSYPFIFLSGDTHPRLAMHRGAKHAKGEYFGPFPNGYAVRETLALLQKIFPIRQCENSVYRNRSRPCLQYQIGRCLGPCVAGLVSEEEYTQQVEYVRLFLSGKDDQVLTQLIARMEKASQDLAFEEAARIRDQIQAVRRVTEKQFVSNAGDDLDVIGVAFDAGMACVHVLFIRQGKVLGSRSYFPKVPGGTELGEVVETFVGQFYLQGSQMRTLPGEILLDFNLSDKTLLADSLSELAGRRIHVQTKPRGDRARYLKLARTNAATALITKLSQQSTITQRLTALAAVLKLPAIKRMECFDISHTMGEQTVASCVVFDANGPLRAEYRRYNIAGITPGDDYAAMNQVLRRRYGKAIEESKIPDVILIDGGKGQLAQAKAVFAELDVPWDKHCPLLLGVAKGADRKAGLETLFFEPEGEGFSLPPDSPALHVIQHIRDESHDHAIGGHRKKRAKVKNTSTLETIEGVGPKRRQMLLKYMGGLQGLRNASVEEIAKVPGISQGLAEKIFWSLKH.

Positions 16 to 94 constitute a GIY-YIG domain; it reads SQPGVYRMYD…IKLYQPRYNV (79 aa). The UVR domain maps to 204 to 239; sequence DQVLTQLIARMEKASQDLAFEEAARIRDQIQAVRRV.

Belongs to the UvrC family. Interacts with UvrB in an incision complex.

The protein localises to the cytoplasm. Functionally, the UvrABC repair system catalyzes the recognition and processing of DNA lesions. UvrC both incises the 5' and 3' sides of the lesion. The N-terminal half is responsible for the 3' incision and the C-terminal half is responsible for the 5' incision. The polypeptide is UvrABC system protein C (Salmonella paratyphi A (strain ATCC 9150 / SARB42)).